The primary structure comprises 453 residues: Ribosomal protein uS12 methylthiotransferase RimO (453 aa).

An MTTase N-terminal domain is found at 5-120 (PKVGFVSLGC…VMQAVHSHLP (116 aa)). Residues C14, C50, C79, C151, C155, and C158 each coordinate [4Fe-4S] cluster. Residues 137 to 382 (LTPRHYAYLK…MEVAEEVSAQ (246 aa)) form the Radical SAM core domain. Residues 385-453 (QRKVGKTLKV…ADGHDLWGEV (69 aa)) enclose the TRAM domain.

This sequence belongs to the methylthiotransferase family. RimO subfamily. Requires [4Fe-4S] cluster as cofactor.

The protein localises to the cytoplasm. The catalysed reaction is L-aspartate(89)-[ribosomal protein uS12]-hydrogen + (sulfur carrier)-SH + AH2 + 2 S-adenosyl-L-methionine = 3-methylsulfanyl-L-aspartate(89)-[ribosomal protein uS12]-hydrogen + (sulfur carrier)-H + 5'-deoxyadenosine + L-methionine + A + S-adenosyl-L-homocysteine + 2 H(+). Catalyzes the methylthiolation of an aspartic acid residue of ribosomal protein uS12. The polypeptide is Ribosomal protein uS12 methylthiotransferase RimO (Burkholderia ambifaria (strain ATCC BAA-244 / DSM 16087 / CCUG 44356 / LMG 19182 / AMMD) (Burkholderia cepacia (strain AMMD))).